Consider the following 112-residue polypeptide: Large ribosomal subunit protein uL24 (112 aa).

It belongs to the universal ribosomal protein uL24 family. Part of the 50S ribosomal subunit.

In terms of biological role, one of two assembly initiator proteins, it binds directly to the 5'-end of the 23S rRNA, where it nucleates assembly of the 50S subunit. Functionally, one of the proteins that surrounds the polypeptide exit tunnel on the outside of the subunit. This is Large ribosomal subunit protein uL24 from Magnetococcus marinus (strain ATCC BAA-1437 / JCM 17883 / MC-1).